We begin with the raw amino-acid sequence, 318 residues long: tRNA pseudouridine synthase B (318 aa).

Aspartate 54 acts as the Nucleophile in catalysis.

This sequence belongs to the pseudouridine synthase TruB family. Type 1 subfamily.

The enzyme catalyses uridine(55) in tRNA = pseudouridine(55) in tRNA. In terms of biological role, responsible for synthesis of pseudouridine from uracil-55 in the psi GC loop of transfer RNAs. This is tRNA pseudouridine synthase B from Ralstonia pickettii (strain 12J).